Here is a 35-residue protein sequence, read N- to C-terminus: Potassium channel toxin alpha-KTx 6.15 (35 aa).

Intrachain disulfides connect C3-C24, C9-C29, C13-C31, and C19-C34.

It belongs to the short scorpion toxin superfamily. Potassium channel inhibitor family. Alpha-KTx 06 subfamily. Expressed by the venom gland.

It localises to the secreted. Its function is as follows. Blocks voltage-gated potassium channels rKv1.1/KCNA1 (IC(50)=13 nM), rKv1.2/KCNA2 (IC(50)=16 nM) and rKv1.3/KCNA3 (IC(50)=2 nM). The protein is Potassium channel toxin alpha-KTx 6.15 of Hemiscorpius lepturus (Scorpion).